The following is a 207-amino-acid chain: Cilia- and flagella-associated protein 418 (207 aa).

Residues 1–75 (MAEDLDELLD…LINEIFEEPH (75 aa)) form a required for interaction with FAM161A region.

In terms of assembly, interacts (via N-terminus) with FAM161A (via central region); the interaction is direct. As to expression, expressed in the retina (at protein level).

It is found in the cytoplasm. It localises to the photoreceptor inner segment. Its function is as follows. May be involved in photoreceptor outer segment disk morphogenesis. This chain is Cilia- and flagella-associated protein 418 (CFAP418), found in Bos taurus (Bovine).